The sequence spans 366 residues: Ribosomal RNA large subunit methyltransferase M (366 aa).

S-adenosyl-L-methionine-binding positions include serine 188, 221–224 (CPGG), aspartate 240, aspartate 260, and aspartate 277. The Proton acceptor role is filled by lysine 306.

Belongs to the class I-like SAM-binding methyltransferase superfamily. RNA methyltransferase RlmE family. RlmM subfamily. In terms of assembly, monomer.

It localises to the cytoplasm. It carries out the reaction cytidine(2498) in 23S rRNA + S-adenosyl-L-methionine = 2'-O-methylcytidine(2498) in 23S rRNA + S-adenosyl-L-homocysteine + H(+). Its function is as follows. Catalyzes the 2'-O-methylation at nucleotide C2498 in 23S rRNA. The protein is Ribosomal RNA large subunit methyltransferase M of Escherichia coli O139:H28 (strain E24377A / ETEC).